Here is a 273-residue protein sequence, read N- to C-terminus: Nitrogenase iron protein (273 aa).

8 to 15 (GKGGIGKS) contributes to the ATP binding site. Residue Cys94 participates in [4Fe-4S] cluster binding. The residue at position 97 (Arg97) is an ADP-ribosylarginine; by dinitrogenase reductase ADP-ribosyltransferase. Residue Cys130 coordinates [4Fe-4S] cluster.

The protein belongs to the NifH/BchL/ChlL family. Homodimer. Requires [4Fe-4S] cluster as cofactor. Post-translationally, the reversible ADP-ribosylation of Arg-97 inactivates the nitrogenase reductase and regulates nitrogenase activity.

It catalyses the reaction N2 + 8 reduced [2Fe-2S]-[ferredoxin] + 16 ATP + 16 H2O = H2 + 8 oxidized [2Fe-2S]-[ferredoxin] + 2 NH4(+) + 16 ADP + 16 phosphate + 6 H(+). In terms of biological role, the key enzymatic reactions in nitrogen fixation are catalyzed by the nitrogenase complex, which has 2 components: the iron protein and the molybdenum-iron protein. The polypeptide is Nitrogenase iron protein (Desulforapulum autotrophicum (strain ATCC 43914 / DSM 3382 / VKM B-1955 / HRM2) (Desulfobacterium autotrophicum)).